A 247-amino-acid polypeptide reads, in one-letter code: 2,3-bisphosphoglycerate-dependent phosphoglycerate mutase (247 aa).

Residues 7 to 14 (RHGESEWN), 20 to 21 (TG), Arg59, 86 to 89 (ERHY), Lys97, 113 to 114 (RR), and 182 to 183 (GN) contribute to the substrate site. His8 acts as the Tele-phosphohistidine intermediate in catalysis. Residue Glu86 is the Proton donor/acceptor of the active site.

The protein belongs to the phosphoglycerate mutase family. BPG-dependent PGAM subfamily.

The enzyme catalyses (2R)-2-phosphoglycerate = (2R)-3-phosphoglycerate. It functions in the pathway carbohydrate degradation; glycolysis; pyruvate from D-glyceraldehyde 3-phosphate: step 3/5. In terms of biological role, catalyzes the interconversion of 2-phosphoglycerate and 3-phosphoglycerate. In Treponema denticola (strain ATCC 35405 / DSM 14222 / CIP 103919 / JCM 8153 / KCTC 15104), this protein is 2,3-bisphosphoglycerate-dependent phosphoglycerate mutase.